Consider the following 20-residue polypeptide: U27-ctenitoxin-Pn1a (20 aa).

The interval 1–20 is disordered; the sequence is LAKRADICQPGKTSQRACET. Residues 11–20 are compositionally biased toward polar residues; it reads GKTSQRACET.

Contains 4 disulfide bonds. As to expression, expressed by the venom gland.

The protein resides in the secreted. Functionally, has a vascular smooth muscle contracting activity. Causes short-lived contractions of both arterial and venous rabbit vessels. This Phoneutria nigriventer (Brazilian armed spider) protein is U27-ctenitoxin-Pn1a.